The primary structure comprises 241 residues: Small ribosomal subunit protein eS4 (241 aa).

In terms of domain architecture, S4 RNA-binding spans 43-105; that stretch reads IPLVMVLRDI…INKTFRVLQD (63 aa).

This sequence belongs to the eukaryotic ribosomal protein eS4 family.

The protein is Small ribosomal subunit protein eS4 of Methanosphaera stadtmanae (strain ATCC 43021 / DSM 3091 / JCM 11832 / MCB-3).